Consider the following 158-residue polypeptide: Small ribosomal subunit protein uS7 (158 aa).

The protein belongs to the universal ribosomal protein uS7 family. In terms of assembly, part of the 30S ribosomal subunit. Contacts proteins S9 and S11.

In terms of biological role, one of the primary rRNA binding proteins, it binds directly to 16S rRNA where it nucleates assembly of the head domain of the 30S subunit. Is located at the subunit interface close to the decoding center, probably blocks exit of the E-site tRNA. This chain is Small ribosomal subunit protein uS7, found in Wolbachia pipientis subsp. Culex pipiens (strain wPip).